Reading from the N-terminus, the 334-residue chain is Adenine deaminase (334 aa).

Zn(2+) contacts are provided by H14, H16, and H194. E197 serves as the catalytic Proton donor. Residue D275 coordinates Zn(2+). D276 provides a ligand contact to substrate.

This sequence belongs to the metallo-dependent hydrolases superfamily. Adenosine and AMP deaminases family. Adenine deaminase type 2 subfamily. Zn(2+) is required as a cofactor.

It carries out the reaction adenine + H2O + H(+) = hypoxanthine + NH4(+). Catalyzes the hydrolytic deamination of adenine to hypoxanthine. Plays an important role in the purine salvage pathway and in nitrogen catabolism. In Hahella chejuensis (strain KCTC 2396), this protein is Adenine deaminase.